Reading from the N-terminus, the 388-residue chain is Paired box protein Pax-5 (388 aa).

Positions 15-141 (RHGGVNQLGG…SSINRIIRTK (127 aa)) form a DNA-binding region, paired. Residues 18 to 74 (GVNQLGGVFVNGRPLPDVVRQRIVELAHQGVRPCDISRQLRVSHGCVSKILGRYYET) are PAI subdomain. Residues 93 to 141 (KVVDKIADYKRQNPTMFAWEIRDRLLAERVCDNDTVPSVSSINRIIRTK) are RED subdomain. A compositionally biased stretch (polar residues) spans 143-158 (QQPTNQQIPPSNHSIA). Disordered regions lie at residues 143 to 162 (QQPTNQQIPPSNHSIASTGS) and 191 to 217 (AETNKRKRDEGIQESPIPNGHSLPGRD).

First detected in mid-neurula embryos in the folding neural tube. With the completion of neurulation, expression becomes localized to the midbrain/hindbrain boundary (MHB) till at least stage 40. Expression is absent from regions adjacent to the MHB. In tailbuds, weakly and transiently expressed in the developing otic vesicle from stage 21 to stage 27.

It is found in the nucleus. In terms of biological role, probable transcription factor. The chain is Paired box protein Pax-5 from Xenopus laevis (African clawed frog).